A 221-amino-acid polypeptide reads, in one-letter code: MSAHMSGLEIMDEDQLIKDVLDKFLNCHEQTYDEEFLNTFTHLSQEDHVSKRGVFGTDSSENIFTSAKVTHKNEADDYHLRNKTIFLRTSSQCLEEQVDNFLDLEDLDMDEEIKPQMSEDLLLLPGEVEQDVSTSIPSCIPFVAQPPTCEVKPKPSVKRMDKQTEEILGDEVQLFSLDEEFDYDNVMLTSKFSPAEIENIKELCKQQKRKDTSPDLEKSCD.

S59 carries the post-translational modification Phosphoserine.

As to quaternary structure, interacts with IFT122; the interaction associates IFTAP with IFT-A complex.

Its function is as follows. Seems to play a role in ciliary BBSome localization, maybe through interaction with IFT-A complex. The chain is Intraflagellar transport-associated protein from Homo sapiens (Human).